A 67-amino-acid polypeptide reads, in one-letter code: Medusin-S1 (67 aa).

An N-terminal signal peptide occupies residues 1–22 (MSFLKKSLFLVLFLGFVSLSIC). A propeptide spanning residues 23-48 (EEEKRETEEKENEQEDDREERSEEKR) is cleaved from the precursor. Residues 26–47 (KRETEEKENEQEDDREERSEEK) form a disordered region. A compositionally biased stretch (acidic residues) spans 31-40 (EKENEQEDDR). Leu66 is modified (leucine amide).

It belongs to the frog skin active peptide (FSAP) family. Medusin subfamily. As to expression, expressed by the skin glands.

The protein resides in the secreted. Its subcellular location is the target cell membrane. Functionally, antibacterial peptide with moderate activity against the Gram-positive bacteria (S.aureus ATCC 25923, MIC=25 uM), but not against all other bacteria (both Gram-positive and Gram-negative) tested. Does not show activity against fungi, and against Leishmania species. It adopts an alpha-helical structure with very low amphipathicity in membrane environments. This is Medusin-S1 from Phyllomedusa sauvagei (Sauvage's leaf frog).